A 200-amino-acid polypeptide reads, in one-letter code: ATP-dependent Clp protease proteolytic subunit 1 (200 aa).

Ser-98 functions as the Nucleophile in the catalytic mechanism. His-123 is a catalytic residue.

This sequence belongs to the peptidase S14 family. Fourteen ClpP subunits assemble into 2 heptameric rings which stack back to back to give a disk-like structure with a central cavity, resembling the structure of eukaryotic proteasomes.

It localises to the cytoplasm. It carries out the reaction Hydrolysis of proteins to small peptides in the presence of ATP and magnesium. alpha-casein is the usual test substrate. In the absence of ATP, only oligopeptides shorter than five residues are hydrolyzed (such as succinyl-Leu-Tyr-|-NHMec, and Leu-Tyr-Leu-|-Tyr-Trp, in which cleavage of the -Tyr-|-Leu- and -Tyr-|-Trp bonds also occurs).. Cleaves peptides in various proteins in a process that requires ATP hydrolysis. Has a chymotrypsin-like activity. Plays a major role in the degradation of misfolded proteins. This Mycobacterium leprae (strain TN) protein is ATP-dependent Clp protease proteolytic subunit 1.